A 234-amino-acid polypeptide reads, in one-letter code: Glucosamine-6-phosphate deaminase (234 aa).

The active-site Proton acceptor; for enolization step is the Asp-62. The For ring-opening step role is filled by Asn-128. The active-site Proton acceptor; for ring-opening step is His-130. Glu-135 (for ring-opening step) is an active-site residue.

It belongs to the glucosamine/galactosamine-6-phosphate isomerase family. NagB subfamily.

The catalysed reaction is alpha-D-glucosamine 6-phosphate + H2O = beta-D-fructose 6-phosphate + NH4(+). It participates in amino-sugar metabolism; N-acetylneuraminate degradation; D-fructose 6-phosphate from N-acetylneuraminate: step 5/5. Functionally, catalyzes the reversible isomerization-deamination of glucosamine 6-phosphate (GlcN6P) to form fructose 6-phosphate (Fru6P) and ammonium ion. The protein is Glucosamine-6-phosphate deaminase of Streptococcus pyogenes serotype M18 (strain MGAS8232).